Here is a 111-residue protein sequence, read N- to C-terminus: Large ribosomal subunit protein uL23 (111 aa).

The protein belongs to the universal ribosomal protein uL23 family. Part of the 50S ribosomal subunit. Contacts protein L29, and trigger factor when it is bound to the ribosome.

One of the early assembly proteins it binds 23S rRNA. One of the proteins that surrounds the polypeptide exit tunnel on the outside of the ribosome. Forms the main docking site for trigger factor binding to the ribosome. This Chlamydia abortus (strain DSM 27085 / S26/3) (Chlamydophila abortus) protein is Large ribosomal subunit protein uL23.